Reading from the N-terminus, the 121-residue chain is Parathyroid hormone-related protein (121 aa).

An N-terminal signal peptide occupies residues 1–14 (VGVFLLSYSVPSCG). The propeptide occupies 15–24 (RSVEELGRRL). Residues 47-58 (RFFLHHLIAEIH) are important for receptor binding. A disordered region spans residues 61–121 (EIRATSEVSP…PGKKKKGKPG (61 aa)). A compositionally biased stretch (polar residues) spans 66-80 (SEVSPNSKPAPNTKN). The Nuclear localization signal motif lies at 98–119 (TNKVETYKEQPLKTPGKKKKGK). A compositionally biased stretch (basic and acidic residues) spans 99–108 (NKVETYKEQP). The segment covering 112–121 (PGKKKKGKPG) has biased composition (basic residues).

Belongs to the parathyroid hormone family. As to quaternary structure, PTHrP interacts with PTH1R (via N-terminal extracellular domain).

Its subcellular location is the secreted. The protein resides in the cytoplasm. It is found in the nucleus. Its function is as follows. Neuroendocrine peptide which is a critical regulator of cellular and organ growth, development, migration, differentiation and survival and of epithelial calcium ion transport. Acts by binding to its receptor, PTH1R, activating G protein-coupled receptor signaling. Regulates endochondral bone development and epithelial-mesenchymal interactions during the formation of the mammary glands and teeth. Required for skeletal homeostasis. Promotes mammary mesenchyme differentiation and bud outgrowth by modulating mesenchymal cell responsiveness to BMPs. Up-regulates BMPR1A expression in the mammary mesenchyme and this increases the sensitivity of these cells to BMPs and allows them to respond to BMP4 in a paracrine and/or autocrine fashion. BMP4 signaling in the mesenchyme, in turn, triggers epithelial outgrowth and augments MSX2 expression, which causes the mammary mesenchyme to inhibit hair follicle formation within the nipple sheath. The chain is Parathyroid hormone-related protein (PTHLH) from Ovis aries (Sheep).